A 112-amino-acid polypeptide reads, in one-letter code: uncharacterized protein (112 aa).

2 N-linked (GlcNAc...) asparagine; by host glycosylation sites follow: asparagine 29 and asparagine 60. Residues 66–86 (IFNGLGFILIVIFIYLLLITL) traverse the membrane as a helical segment.

It belongs to the asfivirus B117L family.

The protein resides in the host membrane. Its subcellular location is the virion. This is an uncharacterized protein from African swine fever virus (isolate Tick/South Africa/Pretoriuskop Pr4/1996) (ASFV).